Reading from the N-terminus, the 1077-residue chain is ATP-dependent helicase/deoxyribonuclease subunit B (1077 aa).

The protein belongs to the helicase family. AddB/RexB type 2 subfamily. Heterodimer of AddA and RexB. Mg(2+) is required as a cofactor.

Its function is as follows. The heterodimer acts as both an ATP-dependent DNA helicase and an ATP-dependent, dual-direction single-stranded exonuclease. Recognizes the chi site generating a DNA molecule suitable for the initiation of homologous recombination. This subunit has 5' -&gt; 3' nuclease activity but not helicase activity. This Streptococcus agalactiae serotype III (strain NEM316) protein is ATP-dependent helicase/deoxyribonuclease subunit B.